The sequence spans 438 residues: Glycosyl hydrolase family 109 protein (438 aa).

Residues 1–33 (MDKTSRRDLLKLASLAGIGAGLARSQGSSKSMA) constitute a signal peptide (tat-type signal). NAD(+)-binding positions include 52 to 53 (GR), D74, 125 to 128 (WVWH), 145 to 146 (EV), and N174. Residues Y203, R221, 233–236 (YPTH), and Y315 each bind substrate. Y233 is an NAD(+) binding site. The segment at 408-438 (GPLSEASVANGSAPQKFPDFTRGKWQTRQPV) is disordered.

It belongs to the Gfo/Idh/MocA family. Glycosyl hydrolase 109 subfamily. NAD(+) is required as a cofactor. Post-translationally, predicted to be exported by the Tat system. The position of the signal peptide cleavage has not been experimentally proven.

Functionally, glycosidase. The polypeptide is Glycosyl hydrolase family 109 protein (Solibacter usitatus (strain Ellin6076)).